The following is a 282-amino-acid chain: Formamidopyrimidine-DNA glycosylase (282 aa).

Pro2 serves as the catalytic Schiff-base intermediate with DNA. Residue Glu3 is the Proton donor of the active site. The active-site Proton donor; for beta-elimination activity is Lys61. Residues His93, Arg112, and Lys158 each coordinate DNA. The FPG-type zinc-finger motif lies at 244 to 278 (DAYGREGEGCRRCGAVMHREKFMNRSSFYCPRCQP). Arg268 serves as the catalytic Proton donor; for delta-elimination activity.

It belongs to the FPG family. In terms of assembly, monomer. Zn(2+) serves as cofactor.

It catalyses the reaction Hydrolysis of DNA containing ring-opened 7-methylguanine residues, releasing 2,6-diamino-4-hydroxy-5-(N-methyl)formamidopyrimidine.. The catalysed reaction is 2'-deoxyribonucleotide-(2'-deoxyribose 5'-phosphate)-2'-deoxyribonucleotide-DNA = a 3'-end 2'-deoxyribonucleotide-(2,3-dehydro-2,3-deoxyribose 5'-phosphate)-DNA + a 5'-end 5'-phospho-2'-deoxyribonucleoside-DNA + H(+). Its function is as follows. Involved in base excision repair of DNA damaged by oxidation or by mutagenic agents. Acts as a DNA glycosylase that recognizes and removes damaged bases. Has a preference for oxidized purines, such as 7,8-dihydro-8-oxoguanine (8-oxoG). Has AP (apurinic/apyrimidinic) lyase activity and introduces nicks in the DNA strand. Cleaves the DNA backbone by beta-delta elimination to generate a single-strand break at the site of the removed base with both 3'- and 5'-phosphates. This chain is Formamidopyrimidine-DNA glycosylase, found in Mycobacterium leprae (strain Br4923).